Consider the following 256-residue polypeptide: Deoxyribose-phosphate aldolase (256 aa).

The Proton donor/acceptor role is filled by Asp-102. Catalysis depends on Lys-165, which acts as the Schiff-base intermediate with acetaldehyde. Lys-197 serves as the catalytic Proton donor/acceptor.

This sequence belongs to the DeoC/FbaB aldolase family. DeoC type 2 subfamily.

The protein resides in the cytoplasm. The enzyme catalyses 2-deoxy-D-ribose 5-phosphate = D-glyceraldehyde 3-phosphate + acetaldehyde. It participates in carbohydrate degradation; 2-deoxy-D-ribose 1-phosphate degradation; D-glyceraldehyde 3-phosphate and acetaldehyde from 2-deoxy-alpha-D-ribose 1-phosphate: step 2/2. In terms of biological role, catalyzes a reversible aldol reaction between acetaldehyde and D-glyceraldehyde 3-phosphate to generate 2-deoxy-D-ribose 5-phosphate. This Shewanella sp. (strain ANA-3) protein is Deoxyribose-phosphate aldolase.